Reading from the N-terminus, the 417-residue chain is MDKLKISANGPLNGEITVSGAKNAALPLMCAGLLTSGTLRLKNVPMLADVKTTQKLLQGMGARVLTDNISEFEINGGTVNNTCAPYELVRTMRASILVLGPTLARFGEAQVSLPGGCAIGSRPVDQHLKGLEAMGAEIVIEHGYVKAKGKLKGTRVAMDVVTVGGTENLLMAATLAEGTTVLENCAIEPEVVDLAECLVKMGAKISGIGTSTMVVEGAGELHGCEHSVVPDRIEAGTFLCAVAITGGRVVLRNAAPKTMEVVLDKLVEAGAVIEAGDDWIAIDMRQRPKAVDIRTVVHPGFPTDMQAQFMALNAVAEGSCRVVETIFENRFMHVPELNRMGANITTEGNTAFVQGVEQLSGAVVKATDLRASASLVIAGLAARGETVVEQIYHLDRGYENIEKKLGSVGAKIERVSG.

22-23 (KN) lines the phosphoenolpyruvate pocket. R93 lines the UDP-N-acetyl-alpha-D-glucosamine pocket. The Proton donor role is filled by C117. C117 is modified (2-(S-cysteinyl)pyruvic acid O-phosphothioketal). Residues 122–126 (RPVDQ), D304, and I326 each bind UDP-N-acetyl-alpha-D-glucosamine.

This sequence belongs to the EPSP synthase family. MurA subfamily.

Its subcellular location is the cytoplasm. The enzyme catalyses phosphoenolpyruvate + UDP-N-acetyl-alpha-D-glucosamine = UDP-N-acetyl-3-O-(1-carboxyvinyl)-alpha-D-glucosamine + phosphate. It participates in cell wall biogenesis; peptidoglycan biosynthesis. Its function is as follows. Cell wall formation. Adds enolpyruvyl to UDP-N-acetylglucosamine. This Neisseria meningitidis serogroup C (strain 053442) protein is UDP-N-acetylglucosamine 1-carboxyvinyltransferase.